An 899-amino-acid polypeptide reads, in one-letter code: DNA mismatch repair protein MutS (899 aa).

Residues 1-20 (MGLQKKTDPEQAQADSAASR) form a disordered region. 631 to 638 (GPNMGGKS) is a binding site for ATP. Positions 832–852 (PPTPDDDEDDFGAAPSAVPAP) are disordered. The span at 843 to 852 (GAAPSAVPAP) shows a compositional bias: low complexity.

This sequence belongs to the DNA mismatch repair MutS family.

Its function is as follows. This protein is involved in the repair of mismatches in DNA. It is possible that it carries out the mismatch recognition step. This protein has a weak ATPase activity. The polypeptide is DNA mismatch repair protein MutS (Cupriavidus necator (strain ATCC 17699 / DSM 428 / KCTC 22496 / NCIMB 10442 / H16 / Stanier 337) (Ralstonia eutropha)).